A 281-amino-acid polypeptide reads, in one-letter code: Ribosomal RNA small subunit methyltransferase I (281 aa).

Belongs to the methyltransferase superfamily. RsmI family.

It localises to the cytoplasm. The catalysed reaction is cytidine(1402) in 16S rRNA + S-adenosyl-L-methionine = 2'-O-methylcytidine(1402) in 16S rRNA + S-adenosyl-L-homocysteine + H(+). Its function is as follows. Catalyzes the 2'-O-methylation of the ribose of cytidine 1402 (C1402) in 16S rRNA. The chain is Ribosomal RNA small subunit methyltransferase I from Erythrobacter litoralis (strain HTCC2594).